Consider the following 199-residue polypeptide: Charged multivesicular body protein 1b (199 aa).

2 coiled-coil regions span residues Asn10–Lys30 and Thr178–Val199. The tract at residues Glu167–Val199 is disordered. Residues Gln170–Ser182 show a composition bias toward polar residues. Positions Asp186 to Arg196 match the MIT-interacting motif motif.

The protein belongs to the SNF7 family. In terms of assembly, probable peripherally associated component of the endosomal sorting required for transport complex III (ESCRT-III).

It localises to the cytoplasm. It is found in the cytosol. The protein resides in the endosome. The protein localises to the late endosome membrane. In terms of biological role, probable peripherally associated component of the endosomal sorting required for transport complex III (ESCRT-III) which is involved in multivesicular bodies (MVBs) formation and sorting of endosomal cargo proteins into MVBs. MVBs contain intraluminal vesicles (ILVs) that are generated by invagination and scission from the limiting membrane of the endosome and mostly are delivered to lysosomes enabling degradation of membrane proteins, such as stimulated growth factor receptors, lysosomal enzymes and lipids. In Danio rerio (Zebrafish), this protein is Charged multivesicular body protein 1b (chmp1b).